We begin with the raw amino-acid sequence, 536 residues long: Light-independent protochlorophyllide reductase subunit B (536 aa).

[4Fe-4S] cluster is bound at residue Asp36. Residue Asp292 is the Proton donor of the active site. Residue 427-428 (GL) coordinates substrate. Low complexity predominate over residues 448–469 (SHLGHLGGHQSQTEQQQSQAAT). Residues 448-489 (SHLGHLGGHQSQTEQQQSQAATNPSTQSNADSSSEESPLWTP) are disordered. The span at 470–483 (NPSTQSNADSSSEE) shows a compositional bias: polar residues.

This sequence belongs to the ChlB/BchB/BchZ family. As to quaternary structure, protochlorophyllide reductase is composed of three subunits; ChlL, ChlN and ChlB. Forms a heterotetramer of two ChlB and two ChlN subunits. The cofactor is [4Fe-4S] cluster.

The enzyme catalyses chlorophyllide a + oxidized 2[4Fe-4S]-[ferredoxin] + 2 ADP + 2 phosphate = protochlorophyllide a + reduced 2[4Fe-4S]-[ferredoxin] + 2 ATP + 2 H2O. The protein operates within porphyrin-containing compound metabolism; chlorophyll biosynthesis (light-independent). Its function is as follows. Component of the dark-operative protochlorophyllide reductase (DPOR) that uses Mg-ATP and reduced ferredoxin to reduce ring D of protochlorophyllide (Pchlide) to form chlorophyllide a (Chlide). This reaction is light-independent. The NB-protein (ChlN-ChlB) is the catalytic component of the complex. The protein is Light-independent protochlorophyllide reductase subunit B of Prochlorococcus marinus (strain MIT 9313).